The sequence spans 684 residues: Threonine--tRNA ligase (684 aa).

The TGS domain occupies M1 to A66. The tract at residues D261–P567 is catalytic. Residues C366, H417, and H544 each contribute to the Zn(2+) site.

This sequence belongs to the class-II aminoacyl-tRNA synthetase family. As to quaternary structure, homodimer. Requires Zn(2+) as cofactor.

It is found in the cytoplasm. The catalysed reaction is tRNA(Thr) + L-threonine + ATP = L-threonyl-tRNA(Thr) + AMP + diphosphate + H(+). In terms of biological role, catalyzes the attachment of threonine to tRNA(Thr) in a two-step reaction: L-threonine is first activated by ATP to form Thr-AMP and then transferred to the acceptor end of tRNA(Thr). Also edits incorrectly charged L-seryl-tRNA(Thr). This is Threonine--tRNA ligase from Mycolicibacterium paratuberculosis (strain ATCC BAA-968 / K-10) (Mycobacterium paratuberculosis).